We begin with the raw amino-acid sequence, 149 residues long: Ribosome maturation factor RimP (149 aa).

This sequence belongs to the RimP family.

Its subcellular location is the cytoplasm. In terms of biological role, required for maturation of 30S ribosomal subunits. This is Ribosome maturation factor RimP from Clostridium acetobutylicum (strain ATCC 824 / DSM 792 / JCM 1419 / IAM 19013 / LMG 5710 / NBRC 13948 / NRRL B-527 / VKM B-1787 / 2291 / W).